Here is a 666-residue protein sequence, read N- to C-terminus: ATP-dependent zinc metalloprotease FtsH (666 aa).

Over 1-6 (MKSETG) the chain is Cytoplasmic. A helical membrane pass occupies residues 7–27 (YMGFVVVLVFMVLLALQLATL). Residues 28–116 (SAPATQIAYS…TRYRGADDDT (89 aa)) lie on the Periplasmic side of the membrane. The helical transmembrane segment at 117–137 (WIGTLASWIVPIAVFALVWNL) threads the bilayer. Residues 138–666 (MLRRPRGGLQ…ADNADHSVPQ (529 aa)) lie on the Cytoplasmic side of the membrane. 210–217 (GAPGTGKT) contributes to the ATP binding site. Residue His432 participates in Zn(2+) binding. Residue Glu433 is part of the active site. Positions 436 and 509 each coordinate Zn(2+). The interval 612-666 (NDEPTPEPGARDPGGDAAKRSGIGAAPAKPPAEVGSAELRDPARKADNADHSVPQ) is disordered. 2 stretches are compositionally biased toward basic and acidic residues: residues 620–630 (GARDPGGDAAK) and 649–666 (ELRD…SVPQ).

This sequence in the central section; belongs to the AAA ATPase family. It in the C-terminal section; belongs to the peptidase M41 family. Homohexamer. It depends on Zn(2+) as a cofactor.

The protein resides in the cell inner membrane. In terms of biological role, acts as a processive, ATP-dependent zinc metallopeptidase for both cytoplasmic and membrane proteins. Plays a role in the quality control of integral membrane proteins. This is ATP-dependent zinc metalloprotease FtsH from Burkholderia pseudomallei (strain 1710b).